A 255-amino-acid chain; its full sequence is Imidazole glycerol phosphate synthase subunit HisF (255 aa).

Residues Asp-12 and Asp-131 contribute to the active site.

This sequence belongs to the HisA/HisF family. Heterodimer of HisH and HisF.

It localises to the cytoplasm. It carries out the reaction 5-[(5-phospho-1-deoxy-D-ribulos-1-ylimino)methylamino]-1-(5-phospho-beta-D-ribosyl)imidazole-4-carboxamide + L-glutamine = D-erythro-1-(imidazol-4-yl)glycerol 3-phosphate + 5-amino-1-(5-phospho-beta-D-ribosyl)imidazole-4-carboxamide + L-glutamate + H(+). It functions in the pathway amino-acid biosynthesis; L-histidine biosynthesis; L-histidine from 5-phospho-alpha-D-ribose 1-diphosphate: step 5/9. Functionally, IGPS catalyzes the conversion of PRFAR and glutamine to IGP, AICAR and glutamate. The HisF subunit catalyzes the cyclization activity that produces IGP and AICAR from PRFAR using the ammonia provided by the HisH subunit. The protein is Imidazole glycerol phosphate synthase subunit HisF of Ruthia magnifica subsp. Calyptogena magnifica.